The primary structure comprises 137 residues: ATP synthase epsilon chain (137 aa).

Belongs to the ATPase epsilon chain family. In terms of assembly, F-type ATPases have 2 components, CF(1) - the catalytic core - and CF(0) - the membrane proton channel. CF(1) has five subunits: alpha(3), beta(3), gamma(1), delta(1), epsilon(1). CF(0) has three main subunits: a, b and c.

It localises to the cell membrane. In terms of biological role, produces ATP from ADP in the presence of a proton gradient across the membrane. The sequence is that of ATP synthase epsilon chain from Mycoplasmopsis synoviae (strain 53) (Mycoplasma synoviae).